A 137-amino-acid polypeptide reads, in one-letter code: Altered inheritance of mitochondria protein 11 (137 aa).

Transmembrane regions (helical) follow at residues 20–37 (YGAA…SRAI) and 66–88 (LTYA…CWAL).

The protein belongs to the AIM11 family.

It localises to the membrane. In Saccharomyces cerevisiae (strain RM11-1a) (Baker's yeast), this protein is Altered inheritance of mitochondria protein 11 (AIM11).